The chain runs to 397 residues: Transaldolase (397 aa).

Residue lysine 136 is the Schiff-base intermediate with substrate of the active site.

The protein belongs to the transaldolase family. Type 1 subfamily. Homodimer.

The protein resides in the cytoplasm. It carries out the reaction D-sedoheptulose 7-phosphate + D-glyceraldehyde 3-phosphate = D-erythrose 4-phosphate + beta-D-fructose 6-phosphate. It participates in carbohydrate degradation; pentose phosphate pathway; D-glyceraldehyde 3-phosphate and beta-D-fructose 6-phosphate from D-ribose 5-phosphate and D-xylulose 5-phosphate (non-oxidative stage): step 2/3. Its function is as follows. Transaldolase is important for the balance of metabolites in the pentose-phosphate pathway. In Synechococcus sp. (strain ATCC 27144 / PCC 6301 / SAUG 1402/1) (Anacystis nidulans), this protein is Transaldolase.